The primary structure comprises 461 residues: Elongation factor 1-alpha (461 aa).

The tr-type G domain maps to 5 to 242; the sequence is KIHINIVVIG…DAILPPSRPT (238 aa). Positions 14-21 are G1; it reads GHVDSGKS. A GTP-binding site is contributed by 14–21; it reads GHVDSGKS. A G2 region spans residues 70 to 74; that stretch reads GITID. Residues 91–94 are G3; it reads DAPG. Residues 91–95 and 153–156 contribute to the GTP site; these read DAPGH and NKMD. Positions 153–156 are G4; it reads NKMD. The segment at 194-196 is G5; that stretch reads SGW. 5-glutamyl glycerylphosphorylethanolamine is present on residues Glu301 and Glu374.

Belongs to the TRAFAC class translation factor GTPase superfamily. Classic translation factor GTPase family. EF-Tu/EF-1A subfamily.

The protein resides in the cytoplasm. This protein promotes the GTP-dependent binding of aminoacyl-tRNA to the A-site of ribosomes during protein biosynthesis. The sequence is that of Elongation factor 1-alpha from Apis mellifera (Honeybee).